We begin with the raw amino-acid sequence, 208 residues long: ATP phosphoribosyltransferase (208 aa).

Belongs to the ATP phosphoribosyltransferase family. Short subfamily. As to quaternary structure, heteromultimer composed of HisG and HisZ subunits.

The protein resides in the cytoplasm. It carries out the reaction 1-(5-phospho-beta-D-ribosyl)-ATP + diphosphate = 5-phospho-alpha-D-ribose 1-diphosphate + ATP. Its pathway is amino-acid biosynthesis; L-histidine biosynthesis; L-histidine from 5-phospho-alpha-D-ribose 1-diphosphate: step 1/9. In terms of biological role, catalyzes the condensation of ATP and 5-phosphoribose 1-diphosphate to form N'-(5'-phosphoribosyl)-ATP (PR-ATP). Has a crucial role in the pathway because the rate of histidine biosynthesis seems to be controlled primarily by regulation of HisG enzymatic activity. This Oceanobacillus iheyensis (strain DSM 14371 / CIP 107618 / JCM 11309 / KCTC 3954 / HTE831) protein is ATP phosphoribosyltransferase.